A 317-amino-acid polypeptide reads, in one-letter code: UV DNA damage endonuclease (317 aa).

Belongs to the uve1/UvsE family.

Component in a DNA repair pathway. Removal of UV LIGHT damaged nucleotides. Recognizes pyrimidine dimers and cleave a phosphodiester bond immediately 5' to the lesion. The sequence is that of UV DNA damage endonuclease from Bacillus cereus (strain G9842).